We begin with the raw amino-acid sequence, 570 residues long: Auxin efflux carrier component 6 (570 aa).

Residues Met-1–Glu-6 are Extracellular-facing. A helical transmembrane segment spans residues Phe-7 to Ser-27. Over Val-28–Gln-38 the chain is Cytoplasmic. A helical transmembrane segment spans residues Cys-39–Ile-59. Val-51 lines the (indol-3-yl)acetate pocket. At Ser-60–Met-70 the chain is on the extracellular side. A helical transmembrane segment spans residues Phe-71–Val-91. Residues Phe-92–Trp-100 lie on the Cytoplasmic side of the membrane. Residues Leu-101–Leu-121 form a helical membrane-spanning segment. Residues Asn-112 and Leu-114 each coordinate (indol-3-yl)acetate. Residues Gln-122–Thr-131 lie on the Extracellular side of the membrane. A helical membrane pass occupies residues Leu-132–Phe-152. Residue Tyr-145 participates in (indol-3-yl)acetate binding. Residues Glu-153–Ser-430 are Cytoplasmic-facing. Phosphoserine is present on residues Ser-230 and Ser-308. Residues Leu-431 to Val-451 traverse the membrane as a helical segment. Over Asp-452–Ser-454 the chain is Extracellular. The chain crosses the membrane as a helical span at residues Ile-455–Ala-475. At Leu-476–Gly-491 the chain is on the cytoplasmic side. A helical transmembrane segment spans residues Met-492–Leu-512. At Arg-513–Ser-515 the chain is on the extracellular side. Residues Arg-516–Ala-536 traverse the membrane as a helical segment. Residues Ile-530 and Val-531 each coordinate (indol-3-yl)acetate. Topologically, residues Arg-537–Leu-549 are cytoplasmic. Residues Val-550–Leu-570 form a helical membrane-spanning segment.

It belongs to the auxin efflux carrier (TC 2.A.69.1) family. In terms of assembly, homodimer. In terms of tissue distribution, expressed in the vasculature of the primary root, cotyledons, floral stem, sepals and the main transmitting tract of the reproductive silique. Expressed in embryos, shoot meristem, root tip and lateral root meristems. Expressed in the nectaries and the floral organ boundaries of the anthers. Detected in pollen. Expressed in broad subepidermal domains that narrowed to sites of vein formation. Expressed in veins of mature leaves.

The protein localises to the endoplasmic reticulum membrane. In terms of biological role, component of the intracellular auxin-transport pathway. Regulates auxin transport and auxin homeostasis. Directly involved in the regulation of nectar production. Involved in unfolded protein response (UPR) activation. Involved in the control of vein patterning. Redundantly with PIN8, inhibits the vein-formation-promoting functions of PIN5. PIN5, PIN6, and PIN8 control vein network geometry, but they are expressed in mutually exclusive domains of leaf vascular cells. The polypeptide is Auxin efflux carrier component 6 (Arabidopsis thaliana (Mouse-ear cress)).